We begin with the raw amino-acid sequence, 321 residues long: MYQLLSVASVPLLASLVHGYADPGACSGVCTTHDPGLIRRESDGTYFLFSTGNKISYVSASSIEGPWTSVGSMLPDGSSIDLDGNDDLWAPDVSYVDGLYYVYYAVSTFGSQDSAIGLATSETMEYGSWTDHGSTGIASSSAKIYNAIDPNLIYADGTYYINFGSFWDDIYQVPMKSTPTAAASSSYNLAYDPSGTHAEEGSYMFQYGDYYYLFYSAGICCGYDTSMPASGEEYHIKVCRSTSPTGDFVDSDGTACTDGGGTMVLESHGEVYGPGGQGVYDDPNLGPVLYYHYMNTTIGYADSDAQFGWNTIDFSSGWPVV.

The first 19 residues, 1–19 (MYQLLSVASVPLLASLVHG), serve as a signal peptide directing secretion. Catalysis depends on Asp-34, which acts as the Proton acceptor. Catalysis depends on Glu-200, which acts as the Proton donor. Asn-295 carries an N-linked (GlcNAc...) asparagine glycan.

Belongs to the glycosyl hydrolase 43 family.

It catalyses the reaction Endohydrolysis of (1-&gt;5)-alpha-arabinofuranosidic linkages in (1-&gt;5)-arabinans.. It functions in the pathway glycan metabolism; L-arabinan degradation. Its function is as follows. Its preferred substrate is linear 1,5-alpha-L-arabinan. The enzyme activity is progressively reduced as 1,5-alpha-chains become shorter or more highly substituted. The protein is Arabinan endo-1,5-alpha-L-arabinosidase A (abnA) of Aspergillus niger.